A 178-amino-acid polypeptide reads, in one-letter code: ATP synthase subunit b, chloroplastic (178 aa).

A helical membrane pass occupies residues 26–46 (TNLINIIILLIILFYFLKGLL).

Belongs to the ATPase B chain family. F-type ATPases have 2 components, F(1) - the catalytic core - and F(0) - the membrane proton channel. F(1) has five subunits: alpha(3), beta(3), gamma(1), delta(1), epsilon(1). F(0) has four main subunits: a(1), b(1), b'(1) and c(10-14). The alpha and beta chains form an alternating ring which encloses part of the gamma chain. F(1) is attached to F(0) by a central stalk formed by the gamma and epsilon chains, while a peripheral stalk is formed by the delta, b and b' chains.

Its subcellular location is the plastid. The protein resides in the chloroplast thylakoid membrane. In terms of biological role, f(1)F(0) ATP synthase produces ATP from ADP in the presence of a proton or sodium gradient. F-type ATPases consist of two structural domains, F(1) containing the extramembraneous catalytic core and F(0) containing the membrane proton channel, linked together by a central stalk and a peripheral stalk. During catalysis, ATP synthesis in the catalytic domain of F(1) is coupled via a rotary mechanism of the central stalk subunits to proton translocation. Functionally, component of the F(0) channel, it forms part of the peripheral stalk, linking F(1) to F(0). The polypeptide is ATP synthase subunit b, chloroplastic (Vaucheria litorea (Yellow-green alga)).